The primary structure comprises 383 residues: Arginine biosynthesis bifunctional protein ArgJ (383 aa).

Substrate contacts are provided by threonine 146, lysine 168, threonine 179, glutamate 259, asparagine 378, and threonine 383. Threonine 179 acts as the Nucleophile in catalysis.

Belongs to the ArgJ family. As to quaternary structure, heterotetramer of two alpha and two beta chains.

The protein resides in the cytoplasm. It carries out the reaction N(2)-acetyl-L-ornithine + L-glutamate = N-acetyl-L-glutamate + L-ornithine. It catalyses the reaction L-glutamate + acetyl-CoA = N-acetyl-L-glutamate + CoA + H(+). It participates in amino-acid biosynthesis; L-arginine biosynthesis; L-ornithine and N-acetyl-L-glutamate from L-glutamate and N(2)-acetyl-L-ornithine (cyclic): step 1/1. The protein operates within amino-acid biosynthesis; L-arginine biosynthesis; N(2)-acetyl-L-ornithine from L-glutamate: step 1/4. Functionally, catalyzes two activities which are involved in the cyclic version of arginine biosynthesis: the synthesis of N-acetylglutamate from glutamate and acetyl-CoA as the acetyl donor, and of ornithine by transacetylation between N(2)-acetylornithine and glutamate. The chain is Arginine biosynthesis bifunctional protein ArgJ from Thermobifida fusca (strain YX).